We begin with the raw amino-acid sequence, 297 residues long: Heterogeneous nuclear ribonucleoprotein D-like (297 aa).

Residues 1–21 form a disordered region; it reads MTGFGATPDFNEGSKINASKN. RRM domains lie at 26 to 108 and 111 to 190; these read GKMF…KGKE and KKVF…QPKE. The disordered stretch occupies residues 192–224; sequence YRQQQQKQQKGGRGAATGRGGARGRGRGQGWNQ. Residues 202–222 are compositionally biased toward gly residues; sequence GGRGAATGRGGARGRGRGQGW.

It localises to the nucleus. It is found in the cytoplasm. Functionally, acts as a transcriptional regulator. Binds DNA and RNA. This chain is Heterogeneous nuclear ribonucleoprotein D-like (hnrnpdl), found in Xenopus tropicalis (Western clawed frog).